Consider the following 396-residue polypeptide: Putative N(4)-(beta-N-acetylglucosaminyl)-L-asparaginase GE19290 (396 aa).

The signal sequence occupies residues 1–23 (MKRHLKACLWVLCFASTALSSLA). 2 disulfides stabilise this stretch: C100–C105 and C199–C215. Catalysis depends on T246, which acts as the Nucleophile. Substrate contacts are provided by residues 274 to 277 (RVGD) and 297 to 300 (TGDG). A disulfide bond links C357 and C384.

This sequence belongs to the Ntn-hydrolase family. Heterotetramer of two alpha and two beta chains arranged as a dimer of alpha/beta heterodimers. Post-translationally, cleaved into an alpha and beta chain by autocatalysis; this activates the enzyme. The N-terminal residue of the beta subunit is responsible for the nucleophile hydrolase activity.

The enzyme catalyses N(4)-(beta-N-acetyl-D-glucosaminyl)-L-asparagine + H2O = N-acetyl-beta-D-glucosaminylamine + L-aspartate + H(+). In terms of biological role, cleaves the GlcNAc-Asn bond which joins oligosaccharides to the peptide of asparagine-linked glycoproteins. This is Putative N(4)-(beta-N-acetylglucosaminyl)-L-asparaginase GE19290 from Drosophila yakuba (Fruit fly).